A 181-amino-acid chain; its full sequence is Squamosa promoter-binding-like protein 5 (181 aa).

The segment covering 1 to 10 has biased composition (basic residues); sequence MEGQRTQRRG. The interval 1–58 is disordered; it reads MEGQRTQRRGYLKDKATVSNLVEEEMENGMDGEEEDGGDEDKRKKVMERVRGPSTDRV. Over residues 22-39 the composition is skewed to acidic residues; the sequence is VEEEMENGMDGEEEDGGD. Basic and acidic residues predominate over residues 40 to 51; it reads EDKRKKVMERVR. An SBP-type zinc finger spans residues 60 to 137; that stretch reads SRLCQVDRCT…AGHNERRRKI (78 aa). Zn(2+) contacts are provided by cysteine 63, cysteine 68, cysteine 85, histidine 88, cysteine 104, cysteine 107, histidine 111, and cysteine 123. Positions 120–136 match the Bipartite nuclear localization signal motif; sequence KRSCRRRLAGHNERRRK. A disordered region spans residues 128 to 181; that stretch reads AGHNERRRKISGDSFGEGSGRRGFSGQLIQTQERNRVDRKLPMTNSSFKRPQIR. The span at 170–181 shows a compositional bias: polar residues; that stretch reads MTNSSFKRPQIR.

It depends on Zn(2+) as a cofactor. As to expression, expressed in the inflorescence apical meristem and young flowers.

It is found in the nucleus. The protein localises to the cytoplasm. In terms of biological role, trans-acting factor that binds specifically to the consensus nucleotide sequence 5'-TNCGTACAA-3' of AP1 promoter. Promotes both vegetative phase change and flowering. The chain is Squamosa promoter-binding-like protein 5 (SPL5) from Arabidopsis thaliana (Mouse-ear cress).